The chain runs to 439 residues: Cell division protein FtsA (439 aa).

This sequence belongs to the FtsA/MreB family. In terms of assembly, self-interacts. Interacts with FtsZ.

It localises to the cell inner membrane. Cell division protein that is involved in the assembly of the Z ring. May serve as a membrane anchor for the Z ring. The polypeptide is Cell division protein FtsA (Shigella flexneri).